We begin with the raw amino-acid sequence, 282 residues long: Energy-coupling factor transporter ATP-binding protein EcfA1 (282 aa).

The 238-residue stretch at 6 to 243 (ISFDHVTFTY…VEMLKRIGLD (238 aa)) folds into the ABC transporter domain. Residue 40–47 (GHNGSGKS) coordinates ATP.

The protein belongs to the ABC transporter superfamily. Energy-coupling factor EcfA family. Forms a stable energy-coupling factor (ECF) transporter complex composed of 2 membrane-embedded substrate-binding proteins (S component), 2 ATP-binding proteins (A component) and 2 transmembrane proteins (T component).

The protein resides in the cell membrane. ATP-binding (A) component of a common energy-coupling factor (ECF) ABC-transporter complex. Unlike classic ABC transporters this ECF transporter provides the energy necessary to transport a number of different substrates. The chain is Energy-coupling factor transporter ATP-binding protein EcfA1 from Lactobacillus delbrueckii subsp. bulgaricus (strain ATCC 11842 / DSM 20081 / BCRC 10696 / JCM 1002 / NBRC 13953 / NCIMB 11778 / NCTC 12712 / WDCM 00102 / Lb 14).